A 715-amino-acid chain; its full sequence is Polyribonucleotide nucleotidyltransferase (715 aa).

The Mg(2+) site is built by aspartate 493 and aspartate 499. The region spanning 560–619 is the KH domain; sequence PRMITVKINPEKIRDVIGKGGSVIRALTEETGTTIDISDDGVVTIASTSSEGMAEAKKRI. Positions 629 to 697 constitute an S1 motif domain; the sequence is GQVYEGTVLK…EKGRVRLSAK (69 aa).

This sequence belongs to the polyribonucleotide nucleotidyltransferase family. Requires Mg(2+) as cofactor.

It localises to the cytoplasm. The catalysed reaction is RNA(n+1) + phosphate = RNA(n) + a ribonucleoside 5'-diphosphate. Its function is as follows. Involved in mRNA degradation. Catalyzes the phosphorolysis of single-stranded polyribonucleotides processively in the 3'- to 5'-direction. This is Polyribonucleotide nucleotidyltransferase from Burkholderia orbicola (strain MC0-3).